We begin with the raw amino-acid sequence, 385 residues long: Protein kup-1 (385 aa).

2 disordered regions span residues methionine 1–aspartate 20 and serine 326–tyrosine 385. 3 stretches are compositionally biased toward basic and acidic residues: residues glycine 8–aspartate 20, arginine 339–valine 351, and glycine 364–tyrosine 385.

The sequence is that of Protein kup-1 (kup-1) from Caenorhabditis elegans.